The sequence spans 104 residues: Replication restart protein PriB (104 aa).

The 101-residue stretch at Met-1–Asp-101 folds into the SSB domain.

It belongs to the PriB family. As to quaternary structure, homodimer. Interacts with PriA and DnaT. Component of the replication restart primosome. Primosome assembly occurs via a 'hand-off' mechanism. PriA binds to replication forks, subsequently PriB then DnaT bind; DnaT then displaces ssDNA to generate the helicase loading substrate.

Involved in the restart of stalled replication forks, which reloads the replicative helicase on sites other than the origin of replication; the PriA-PriB pathway is the major replication restart pathway. During primosome assembly it facilitates complex formation between PriA and DnaT on DNA; stabilizes PriA on DNA. Stimulates the DNA unwinding activity of PriA helicase. The protein is Replication restart protein PriB of Enterobacter sp. (strain 638).